Consider the following 244-residue polypeptide: Chlorosome protein I (244 aa).

The 2Fe-2S ferredoxin-type domain occupies 1–95 (MNLIINDKTA…TVKVLSRPEE (95 aa)). Positions 33, 39, 42, and 77 each coordinate [2Fe-2S] cluster.

[2Fe-2S] cluster is required as a cofactor.

The protein resides in the chlorosome. Could play a direct role in the oxidation or reduction of the quenching species formed in the chlorosome. The sequence is that of Chlorosome protein I (csmI) from Chlorobaculum tepidum (strain ATCC 49652 / DSM 12025 / NBRC 103806 / TLS) (Chlorobium tepidum).